A 1179-amino-acid polypeptide reads, in one-letter code: Integrin alpha-1 (1179 aa).

An N-terminal signal peptide occupies residues 1–28 (MVPRRPASLEVTVACIWLLTVILGVCIS). Topologically, residues 29–1141 (FNVDVKNSMS…SKDGLPGRVP (1113 aa)) are extracellular. The stretch at 30 to 91 (NVDVKNSMSF…CPVGRERSMP (62 aa)) is one FG-GAP 1 repeat. An intrachain disulfide couples cysteine 82 to cysteine 92. Asparagine 100, asparagine 105, asparagine 112, asparagine 217, asparagine 317, asparagine 341, asparagine 402, asparagine 418, and asparagine 459 each carry an N-linked (GlcNAc...) asparagine glycan. The stretch at 101 to 160 (TSIPNVTEIKENMTFGSTLVTNPKGGFLACGPLYAYRCGHLHYTTGICSDVSPTFQVVNS) is one FG-GAP 2 repeat. A VWFA domain is found at 175–364 (IVLDGSNSIY…LGERIFALEA (190 aa)). The FG-GAP 3 repeat unit spans residues 365-417 (TADQSAASFEMEMSQTGFSAHYSQDWVMLGAVGAYDWNGTVVMQKANQIVIPH). FG-GAP repeat units follow at residues 422–474 (QTEP…DGDV), 475–537 (NILQ…RFEY), 556–614 (SCTK…TIRK), and 618–678 (QRIP…FEPN). Residues aspartate 497, aspartate 499, aspartate 501, and aspartate 505 each contribute to the Ca(2+) site. Asparagine 531 carries N-linked (GlcNAc...) asparagine glycosylation. Ca(2+)-binding residues include aspartate 579, asparagine 581, aspartate 583, aspartate 587, aspartate 641, asparagine 643, aspartate 645, and aspartate 649. A disulfide bridge connects residues cysteine 687 and cysteine 696. Residues asparagine 698, asparagine 747, and asparagine 779 are each glycosylated (N-linked (GlcNAc...) asparagine). Cysteine 702 and cysteine 755 are joined by a disulfide. A disulfide bridge links cysteine 807 with cysteine 813. N-linked (GlcNAc...) asparagine glycosylation is found at asparagine 839, asparagine 882, asparagine 907, asparagine 938, asparagine 965, asparagine 973, and asparagine 1007. Cysteine 877 and cysteine 885 form a disulfide bridge. 2 cysteine pairs are disulfide-bonded: cysteine 1029–cysteine 1062 and cysteine 1065–cysteine 1072. Asparagine 1083, asparagine 1102, and asparagine 1113 each carry an N-linked (GlcNAc...) asparagine glycan. A helical transmembrane segment spans residues 1142–1164 (LWVILLSAFAGLLLLMLLILALW). Residues 1165–1179 (KIGFFKRPLKKKMEK) are Cytoplasmic-facing. The GFFKR motif motif lies at 1167–1171 (GFFKR).

The protein belongs to the integrin alpha chain family. Heterodimer of an alpha and a beta subunit. Alpha-1 associates with beta-1. Interacts with RAB21. Interacts (via cytoplasmic domain) with PTPN2; activates PTPN2 phosphatase activity towards EGFR and negatively regulates EGF signaling.

It is found in the membrane. Functionally, integrin alpha-1/beta-1 is a receptor for laminin and collagen. It recognizes the proline-hydroxylated sequence G-F-P-G-E-R in collagen. Involved in anchorage-dependent, negative regulation of EGF-stimulated cell growth. This chain is Integrin alpha-1 (Itga1), found in Mus musculus (Mouse).